A 701-amino-acid polypeptide reads, in one-letter code: Elongation factor G (701 aa).

One can recognise a tr-type G domain in the interval Ser-8–Thr-290. GTP is bound by residues Ala-17–Thr-24, Asp-88–His-92, and Asn-142–Asp-145.

It belongs to the TRAFAC class translation factor GTPase superfamily. Classic translation factor GTPase family. EF-G/EF-2 subfamily.

It is found in the cytoplasm. Functionally, catalyzes the GTP-dependent ribosomal translocation step during translation elongation. During this step, the ribosome changes from the pre-translocational (PRE) to the post-translocational (POST) state as the newly formed A-site-bound peptidyl-tRNA and P-site-bound deacylated tRNA move to the P and E sites, respectively. Catalyzes the coordinated movement of the two tRNA molecules, the mRNA and conformational changes in the ribosome. The chain is Elongation factor G from Actinobacillus pleuropneumoniae serotype 5b (strain L20).